The chain runs to 377 residues: Pseudouridylate synthase RPUSD4, mitochondrial (377 aa).

The N-terminal 46 residues, 1 to 46 (MAAPCLRTPGVQLLSMSSRPGRLFTPGSWSFCSSATSSRPLNAQRL), are a transit peptide targeting the mitochondrion. Residue Asp-153 is part of the active site.

This sequence belongs to the pseudouridine synthase RluA family. Interacts with 16S mt-rRNA, mt-tRNA(Phe) and mt-tRNA(Met). Forms a regulatory protein-RNA complex, consisting of RCC1L, NGRN, RPUSD3, RPUSD4, TRUB2, FASTKD2 and 16S mt-rRNA.

It localises to the mitochondrion matrix. Its subcellular location is the nucleus. The protein resides in the cytoplasm. The enzyme catalyses uridine in 5S rRNA = pseudouridine in 5S rRNA. It carries out the reaction a uridine in tRNA = a pseudouridine in tRNA. It catalyses the reaction a uridine in mRNA = a pseudouridine in mRNA. Catalyzes uridine to pseudouridine isomerization (pseudouridylation) of different mitochondrial RNA substrates. Acts on position 1397 in 16S mitochondrial ribosomal RNA (16S mt-rRNA). This modification is required for the assembly of 16S mt-rRNA into a functional mitochondrial ribosome. As a component of a functional protein-RNA module, consisting of RCC1L, NGRN, RPUSD3, RPUSD4, TRUB2, FASTKD2 and 16S mt-rRNA, controls 16S mt-rRNA abundance and is required for intra-mitochondrial translation. Acts on position 39 in mitochondrial tRNA(Phe). Also catalyzes pseudouridylation of mRNAs in nucleus: acts as a regulator of pre-mRNA splicing by mediating pseudouridylation of pre-mRNAs at locations associated with alternatively spliced regions. Pseudouridylation of pre-mRNAs near splice sites directly regulates mRNA splicing and mRNA 3'-end processing. The chain is Pseudouridylate synthase RPUSD4, mitochondrial from Mus musculus (Mouse).